Consider the following 202-residue polypeptide: GTP-binding protein rho1 (202 aa).

13–20 contacts GTP; the sequence is GDGACGKT. Residues 35–43 carry the Effector region motif; it reads YVPTVFENY. GTP contacts are provided by residues 60–64 and 118–121; these read DTAGQ and CKAD. Cys-199 is modified (cysteine methyl ester). Residue Cys-199 is the site of S-geranylgeranyl cysteine attachment. Positions 200-202 are cleaved as a propeptide — removed in mature form; it reads ILL.

The protein belongs to the small GTPase superfamily. Rho family.

Its subcellular location is the cell membrane. Involved in the regulation of cell wall growth and actin cytoskeleton organization. Activates (1,3)-beta-D-glucan synthase. In Schizosaccharomyces pombe (strain 972 / ATCC 24843) (Fission yeast), this protein is GTP-binding protein rho1 (rho1).